A 317-amino-acid chain; its full sequence is Ribonuclease Z (317 aa).

7 residues coordinate Zn(2+): His63, His65, Asp67, His68, His143, Asp213, and His273. The active-site Proton acceptor is the Asp67.

Belongs to the RNase Z family. Homodimer. Requires Zn(2+) as cofactor.

The enzyme catalyses Endonucleolytic cleavage of RNA, removing extra 3' nucleotides from tRNA precursor, generating 3' termini of tRNAs. A 3'-hydroxy group is left at the tRNA terminus and a 5'-phosphoryl group is left at the trailer molecule.. Functionally, zinc phosphodiesterase, which displays some tRNA 3'-processing endonuclease activity. Probably involved in tRNA maturation, by removing a 3'-trailer from precursor tRNA. This chain is Ribonuclease Z, found in Methanocaldococcus jannaschii (strain ATCC 43067 / DSM 2661 / JAL-1 / JCM 10045 / NBRC 100440) (Methanococcus jannaschii).